Here is a 433-residue protein sequence, read N- to C-terminus: Evolutionarily conserved signaling intermediate in Toll pathway, mitochondrial (433 aa).

A mitochondrion-targeting transit peptide spans 1-48 (MSWAQAILLARGASRGWGGICSTALTGAPFSQVPPQAPRGLRCSAAAH). The disordered stretch occupies residues 36 to 63 (QAPRGLRCSAAAHNPDSSLVPHPPEPPR). Lys-372 participates in a covalent cross-link: Glycyl lysine isopeptide (Lys-Gly) (interchain with G-Cter in ubiquitin). The interval 397 to 433 (SGELLPSSSELEEPPPPPPEGQEEEEDSQQRQQQGQS) is disordered.

Belongs to the ECSIT family. In terms of assembly, interacts with MAP3K1, SMAD4 and TRAF6. Interacts with SMAD1 only after BMP4-treatment. Part of the mitochondrial complex I assembly/MCIA complex that comprises at least the core subunits TMEM126B, NDUFAF1, ECSIT and ACAD9 and complement subunits such as COA1 and TMEM186. Interacts with NDUFAF1. Interacts with ACAD9. Interacts with TRIM59. Interacts with TMEM70 and TMEM242. Interacts (when ubiquitinated) with NF-kappa-B subunits RELA and NFKB1. Interacts with RIGI, IFIT1 and MAVS; these interactions promote RLR-mediated type I IFN induction. Interacts with SQSTM1; this interaction inhibits TLR4 signaling via functional regulation of the TRAF6-ECSIT complex. Interacts with cereblon/CRBN; this interaction inhibits the ubiquitination of ECSIT. In terms of processing, ubiquitinated on Lys-372; leading to translocation in the nucleus together with RELA and NFKB1 and expression of NF-kappa-B-dependent genes.

It is found in the cytoplasm. It localises to the nucleus. The protein localises to the mitochondrion. Functionally, adapter protein that plays a role in different signaling pathways including TLRs and IL-1 pathways or innate antiviral induction signaling. Plays a role in the activation of NF-kappa-B by forming a signal complex with TRAF6 and TAK1/MAP3K7 to activate TAK1/MAP3K7 leading to activation of IKKs. Once ubiquitinated, interacts with the dissociated RELA and NFKB1 proteins and translocates to the nucleus where it induces NF-kappa-B-dependent gene expression. Plays a role in innate antiviral immune response by bridging the pattern recognition receptors RIGI and MDA5/IFIT1 to the MAVS complex at the mitochondrion. Promotes proteolytic activation of MAP3K1. Involved in the BMP signaling pathway. Required for normal embryonic development. In terms of biological role, as part of the MCIA complex, involved in the assembly of the mitochondrial complex I. This Bos taurus (Bovine) protein is Evolutionarily conserved signaling intermediate in Toll pathway, mitochondrial.